Here is a 214-residue protein sequence, read N- to C-terminus: dITP/XTP pyrophosphatase (214 aa).

13-18 (SHNKGK) contributes to the substrate binding site. The Mg(2+) site is built by Glu-45 and Asp-74. Catalysis depends on Asp-74, which acts as the Proton acceptor. Substrate-binding positions include Ser-75, 163 to 166 (FGYD), Lys-186, and 199 to 200 (HR).

Belongs to the HAM1 NTPase family. As to quaternary structure, homodimer. Mg(2+) serves as cofactor.

The catalysed reaction is XTP + H2O = XMP + diphosphate + H(+). It carries out the reaction dITP + H2O = dIMP + diphosphate + H(+). It catalyses the reaction ITP + H2O = IMP + diphosphate + H(+). Its function is as follows. Pyrophosphatase that catalyzes the hydrolysis of nucleoside triphosphates to their monophosphate derivatives, with a high preference for the non-canonical purine nucleotides XTP (xanthosine triphosphate), dITP (deoxyinosine triphosphate) and ITP. Seems to function as a house-cleaning enzyme that removes non-canonical purine nucleotides from the nucleotide pool, thus preventing their incorporation into DNA/RNA and avoiding chromosomal lesions. This Agrobacterium fabrum (strain C58 / ATCC 33970) (Agrobacterium tumefaciens (strain C58)) protein is dITP/XTP pyrophosphatase.